The chain runs to 137 residues: Large ribosomal subunit protein uL16 (137 aa).

This sequence belongs to the universal ribosomal protein uL16 family. Part of the 50S ribosomal subunit.

Functionally, binds 23S rRNA and is also seen to make contacts with the A and possibly P site tRNAs. This is Large ribosomal subunit protein uL16 from Methylocella silvestris (strain DSM 15510 / CIP 108128 / LMG 27833 / NCIMB 13906 / BL2).